A 264-amino-acid polypeptide reads, in one-letter code: Zinc import ATP-binding protein ZnuC (264 aa).

The region spanning 11–226 (IELQNIKVVF…PTFIHLFGDQ (216 aa)) is the ABC transporter domain. 43-50 (GPNGGGKS) is a binding site for ATP.

This sequence belongs to the ABC transporter superfamily. Zinc importer (TC 3.A.1.15.5) family. As to quaternary structure, the complex is composed of two ATP-binding proteins (ZnuC), two transmembrane proteins (ZnuB) and a solute-binding protein (ZnuA).

The protein resides in the cell inner membrane. The enzyme catalyses Zn(2+)(out) + ATP(in) + H2O(in) = Zn(2+)(in) + ADP(in) + phosphate(in) + H(+)(in). Part of the ABC transporter complex ZnuABC involved in zinc import. Responsible for energy coupling to the transport system. The sequence is that of Zinc import ATP-binding protein ZnuC from Mannheimia succiniciproducens (strain KCTC 0769BP / MBEL55E).